The sequence spans 446 residues: MREIVHLQTGQCGNQIGAAFWQTISGEHGLDSNGVYNGTSELQLERMSVYFNEASGNKYVPRAVLVDLEPGTMDAVRAGPFGQLFRPDNFVFGQSGAGNNWAKGHYTEGAELVDQVLDVVRREAEGCDCLQGFQITHSLGGGTGAGMGTLLISKIREEFPDRMMATFSVVPSPKVSDTVVEPYNATLSVHQLVENSDETFCIDNEALYDICMRTLKLSNPSYGDLNYLVSAVMSGVTTCLRFPGQLNSDLRKLAVNMVPFPRLHFFMVGFAPLTSRGAHSFRAVSVPELTQQMFDPKNMMAASDFRNGRYLTCSAIFRGRVAMKEVEDQMRNVQSKNSSYFVEWIPNNIQTALCAIPPRGLTMSSTFIGNSTSIQELFKRVGEQFTAMFRRKAFLHWYTGEGMDEMEFTEAESNMNDLVSEYQQYQDAGIDEEEEEYEEELPEGEE.

The GTP site is built by Gln-11, Glu-69, Ser-138, Gly-142, Thr-143, Gly-144, Asn-204, and Asn-226. Residue Glu-69 coordinates Mg(2+). Positions 422–446 are disordered; it reads YQQYQDAGIDEEEEEYEEELPEGEE. Residues 429–446 show a composition bias toward acidic residues; it reads GIDEEEEEYEEELPEGEE.

This sequence belongs to the tubulin family. As to quaternary structure, dimer of alpha and beta chains. A typical microtubule is a hollow water-filled tube with an outer diameter of 25 nm and an inner diameter of 15 nM. Alpha-beta heterodimers associate head-to-tail to form protofilaments running lengthwise along the microtubule wall with the beta-tubulin subunit facing the microtubule plus end conferring a structural polarity. Microtubules usually have 13 protofilaments but different protofilament numbers can be found in some organisms and specialized cells. Mg(2+) serves as cofactor.

The protein resides in the cytoplasm. The protein localises to the cytoskeleton. Its function is as follows. Tubulin is the major constituent of microtubules, a cylinder consisting of laterally associated linear protofilaments composed of alpha- and beta-tubulin heterodimers. Microtubules grow by the addition of GTP-tubulin dimers to the microtubule end, where a stabilizing cap forms. Below the cap, tubulin dimers are in GDP-bound state, owing to GTPase activity of alpha-tubulin. The sequence is that of Tubulin beta chain (TUB2) from Gibberella zeae (strain ATCC MYA-4620 / CBS 123657 / FGSC 9075 / NRRL 31084 / PH-1) (Wheat head blight fungus).